The primary structure comprises 722 residues: Delta-like protein 1 (722 aa).

The N-terminal stretch at 1 to 17 (MGRRSALALAVVSALLC) is a signal peptide. Topologically, residues 18–545 (QVWSSGVFEL…MESQGGPFPW (528 aa)) are extracellular. The DSL domain occupies 176–220 (FVCDEHYYGEGCSVFCRPRDDAFGHFTCGDRGEKMCDPGWKGQYC). Cystine bridges form between Cys178–Cys187, Cys191–Cys203, Cys211–Cys220, Cys225–Cys236, Cys229–Cys242, Cys244–Cys253, Cys256–Cys267, Cys262–Cys273, Cys275–Cys284, Cys291–Cys303, Cys297–Cys313, Cys315–Cys324, Cys331–Cys342, Cys336–Cys351, Cys353–Cys362, Cys369–Cys380, Cys374–Cys390, Cys392–Cys401, Cys408–Cys419, Cys413–Cys428, Cys430–Cys439, Cys446–Cys457, Cys451–Cys466, Cys468–Cys477, Cys484–Cys495, Cys489–Cys504, and Cys506–Cys515. EGF-like domains follow at residues 225-253 (CLPGCDDQHGYCDKPGECKCRVGWQGRYC), 256-284 (CIRYPGCLHGTCQQPWQCNCQEGWGGLFC), and 291-324 (CTHHKPCRNGATCTNTGQGSYTCSCRPGYTGANC). One can recognise an EGF-like 4; calcium-binding domain in the interval 331–362 (CAPSPCKNGASCTDLEDSFSCTCPPGFYGKVC). 2 consecutive EGF-like domains span residues 369–401 (CADGPCFNGGRCSDNPDGGYTCHCPLGFSGFNC) and 408–439 (CGSSPCSNGAKCVDLGNSYLCRCQAGFSGRYC). The 32-residue stretch at 446–477 (CASSPCANGGTCRDSVNDFSCTCPPGYTGKNC) folds into the EGF-like 7; calcium-binding domain. Residue Asn476 is glycosylated (N-linked (GlcNAc...) asparagine). The EGF-like 8 domain occupies 484–515 (CEHAPCHNGATCHQRGQRYMCECAQGYGGPNC). A helical membrane pass occupies residues 546–568 (VAVCAGVVLVLLLLLGCAAVVVC). The Cytoplasmic portion of the chain corresponds to 569–722 (VRLKLQKHQP…KDECVIATEV (154 aa)). A Glycyl lysine isopeptide (Lys-Gly) (interchain with G-Cter in ubiquitin) cross-link involves residue Lys613. Thr638 carries the post-translational modification Phosphothreonine. Basic and acidic residues predominate over residues 655–664 (RDTHSKRDTK). Residues 655-697 (RDTHSKRDTKCQSQSSAGEEKIAPTLRGGEIPDRKRPESVYST) are disordered. Ser693 bears the Phosphoserine; by PKB mark. A Phosphoserine modification is found at Ser696. The interval 719 to 722 (ATEV) is interaction with MAGI1.

In terms of assembly, homodimer. Interacts with TJP1. Interacts with MMP14; inhibits DLL1-induced Notch signaling. Interacts with MAGI1 (via PDZ domain); forms a complex with CTNNB1 and CDH2 and promotes recruitment to the adherens junction and stabilization on the cell surface. Interacts with PSEN1; undergoes a presenilin-dependent gamma-secretase cleavage that releases a Dll1-intracellular form. Interacts with MFAP5. Interacts with MIB1. Interacts with NEURL1B; leads to ubiquitination. Interacts with NEURL1. Interacts with SYNJ2BP; enhances DLL1 protein stability, and promotes Notch signaling in endothelial cells. Interacts with MAGI1, MAGI2, MAGI3 and MPDZ. Interacts (via ubiquitin) with EPN1 (via IUM domain); binding with NOTCH1 attached to neighboring cell, promotes ligand ubiquitination and EPN1 interaction, leading to NECD transendocytosis and Notch signaling. Interacts with NOTCH1. Ubiquitinated by MIB (MIB1 or MIB2), leading to its endocytosis and subsequent degradation. Ubiquitinated; promotes recycling back to the plasma membrane and confers a strong affinity for NOTCH1. Multi-ubiquitination of Lys-613 by MIB1 promotes both cis and trans-interaction with NOTCH1, as well as activation of Notch signaling. Ubiquitinated by NEURL1B. In terms of processing, phosphorylated in a membrane association-dependent manner. Phosphorylation at Ser-696 requires the presence of Ser-693, whereas phosphorylation at Thr-638 and Ser-693 occurs independently of the other sites. Phosphorylation is required for full ligand activity in vitro and affects surface presentation, ectodomain shedding, and endocytosis. Post-translationally, cleaved by MMP14; negatively regulates DLL1-induced Notch signaling in HPCs, modulating B-lymphocyte differentiation in bone marrow. Undergoes two consecutive processing events: a shedding event, partially by ADAM10, that generates a soluble extracellular form and an intracellular membrane-anchored form, followed by a gamma-secretase cleavage releasing an intracellular fragment. O-fucosylated. Can be elongated to a disaccharide by MFNG. In terms of tissue distribution, in the embryo, expressed in the paraxial mesoderm and nervous system. Expressed at high levels in adult heart and at lower levels, in adult lung. Highly expressed in satellite cells from masseter and tongue than in satellite cells from leg and extraocular muscle.?.

The protein localises to the apical cell membrane. Its subcellular location is the cell junction. The protein resides in the adherens junction. It is found in the membrane raft. It localises to the cell membrane. The protein localises to the nucleus. Functionally, transmembrane ligand protein of NOTCH1, NOTCH2 and NOTCH3 receptors that binds the extracellular domain (ECD) of Notch receptor in a cis and trans fashion manner. Following transinteraction, ligand cells produce mechanical force that depends of a clathrin-mediated endocytosis, requiring ligand ubiquitination, EPN1 interaction, and actin polymerisation; these events promote Notch receptor extracellular domain (NECD) transendocytosis and triggers Notch signaling through induction of cleavage, hyperphosphorylation, and nuclear accumulation of the intracellular domain of Notch receptors (NICD). Is required for embryonic development and maintenance of adult stem cells in many different tissues and immune systeme; the DLL1-induced Notch signaling is mediated through an intercellular communication that regulates cell lineage, cell specification, cell patterning and morphogenesis through effects on differentiation and proliferation. Plays a role in brain development at different level, namely by regulating neuronal differentiation of neural precursor cells via cell-cell interaction, most likely through the lateral inhibitory system in an endogenous level dependent-manner. During neocortex development, Dll1-Notch signaling transmission is mediated by dynamic interactions between intermediate neurogenic progenitors and radial glia; the cell-cell interactions are mediated via dynamic and transient elongation processes, likely to reactivate/maintain Notch activity in neighboring progenitors, and coordinate progenitor cell division and differentiation across radial and zonal boundaries. During cerebellar development, regulates Bergmann glial monolayer formation and its morphological maturation through a Notch signaling pathway. At the retina and spinal cord level, regulates neurogenesis by preventing the premature differentiation of neural progenitors and also by maintaining progenitors in spinal cord through Notch signaling pathway. Also controls neurogenesis of the neural tube in a progenitor domain-specific fashion along the dorsoventral axis. Maintains quiescence of neural stem cells and plays a role as a fate determinant that segregates asymmetrically to one daughter cell during neural stem cells mitosis, resulting in neuronal differentiation in Dll1-inheriting cell. Plays a role in immune systeme development, namely the development of all T-cells and marginal zone (MZ) B cells. Blocks the differentiation of progenitor cells into the B-cell lineage while promoting the emergence of a population of cells with the characteristics of a T-cell/NK-cell precursor. Upon MMP14 cleavage, negatively regulates Notch signaling in haematopoietic progenitor cells to specifically maintain normal B-cell development in bone marrow. Also plays a role during muscle development. During early development, inhibits myoblasts differentiation from the medial dermomyotomal lip and later regulates progenitor cell differentiation. Directly modulates cell adhesion and basal lamina formation in satellite cells through Notch signaling. Maintains myogenic progenitors pool by suppressing differentiation through down-regulation of MYOD1 and is required for satellite cell homing and PAX7 expression. During craniofacial and trunk myogenesis suppresses differentiation of cranial mesoderm-derived and somite-derived muscle via MYOD1 regulation but in cranial mesoderm-derived progenitors, is neither required for satellite cell homing nor for PAX7 expression. Also plays a role during pancreatic cell development. During type B pancreatic cell development, may be involved in the initiation of proximodistal patterning in the early pancreatic epithelium. Stimulates multipotent pancreatic progenitor cells proliferation and pancreatic growth by maintaining HES1 expression and PTF1A protein levels. During fetal stages of development, is required to maintain arterial identity and the responsiveness of arterial endothelial cells for VEGFA through regulation of KDR activation and NRP1 expression. Controls sprouting angiogenesis and subsequent vertical branch formation through regulation on tip cell differentiation. Negatively regulates goblet cell differentiation in intestine and controls secretory fat commitment through lateral inhibition in small intestine. Plays a role during inner ear development; negatively regulates auditory hair cell differentiation. Plays a role during nephron development through Notch signaling pathway. Regulates growth, blood pressure and energy homeostasis. This is Delta-like protein 1 (Dll1) from Mus musculus (Mouse).